The chain runs to 120 residues: Large ribosomal subunit protein uL18 (120 aa).

This sequence belongs to the universal ribosomal protein uL18 family. Part of the 50S ribosomal subunit; part of the 5S rRNA/L5/L18/L25 subcomplex. Contacts the 5S and 23S rRNAs.

Its function is as follows. This is one of the proteins that bind and probably mediate the attachment of the 5S RNA into the large ribosomal subunit, where it forms part of the central protuberance. The protein is Large ribosomal subunit protein uL18 of Rippkaea orientalis (strain PCC 8801 / RF-1) (Cyanothece sp. (strain PCC 8801)).